A 203-amino-acid polypeptide reads, in one-letter code: Dual-action ribosomal maturation protein DarP (203 aa).

Disordered stretches follow at residues M1–K31 and N178–A203. Positions G21–K31 are enriched in basic and acidic residues. The span at S188–A203 shows a compositional bias: acidic residues.

Belongs to the DarP family.

It is found in the cytoplasm. Functionally, member of a network of 50S ribosomal subunit biogenesis factors which assembles along the 30S-50S interface, preventing incorrect 23S rRNA structures from forming. Promotes peptidyl transferase center (PTC) maturation. The polypeptide is Dual-action ribosomal maturation protein DarP (Paraburkholderia xenovorans (strain LB400)).